Here is a 209-residue protein sequence, read N- to C-terminus: Chaperone protein TorD (209 aa).

Belongs to the TorD/DmsD family. TorD subfamily.

It is found in the cytoplasm. In terms of biological role, involved in the biogenesis of TorA. Acts on TorA before the insertion of the molybdenum cofactor and, as a result, probably favors a conformation of the apoenzyme that is competent for acquiring the cofactor. The polypeptide is Chaperone protein TorD (Shewanella baltica (strain OS185)).